The primary structure comprises 194 residues: Large ribosomal subunit protein bL9 (194 aa).

Belongs to the bacterial ribosomal protein bL9 family.

Binds to the 23S rRNA. The polypeptide is Large ribosomal subunit protein bL9 (Rhodopseudomonas palustris (strain BisA53)).